Here is a 162-residue protein sequence, read N- to C-terminus: Phosphopantetheine adenylyltransferase (162 aa).

Threonine 9 is a substrate binding site. Residues 9-10 (TF) and histidine 17 each bind ATP. The substrate site is built by lysine 41, leucine 76, and arginine 90. ATP-binding positions include 91-93 (GLR), glutamate 101, and 126-132 (HQAIASR).

It belongs to the bacterial CoaD family. As to quaternary structure, homohexamer. Mg(2+) is required as a cofactor.

Its subcellular location is the cytoplasm. The enzyme catalyses (R)-4'-phosphopantetheine + ATP + H(+) = 3'-dephospho-CoA + diphosphate. It functions in the pathway cofactor biosynthesis; coenzyme A biosynthesis; CoA from (R)-pantothenate: step 4/5. Reversibly transfers an adenylyl group from ATP to 4'-phosphopantetheine, yielding dephospho-CoA (dPCoA) and pyrophosphate. This Caulobacter sp. (strain K31) protein is Phosphopantetheine adenylyltransferase.